Here is a 119-residue protein sequence, read N- to C-terminus: Holo-[acyl-carrier-protein] synthase (119 aa).

Mg(2+)-binding residues include Asp-8 and Glu-58.

The protein belongs to the P-Pant transferase superfamily. AcpS family. The cofactor is Mg(2+).

Its subcellular location is the cytoplasm. The catalysed reaction is apo-[ACP] + CoA = holo-[ACP] + adenosine 3',5'-bisphosphate + H(+). Transfers the 4'-phosphopantetheine moiety from coenzyme A to a Ser of acyl-carrier-protein. The sequence is that of Holo-[acyl-carrier-protein] synthase from Bacillus thuringiensis subsp. konkukian (strain 97-27).